The sequence spans 826 residues: BLOC-2 complex member HPS5 homolog (826 aa).

3 WD repeats span residues 22 to 61, 63 to 102, and 110 to 149; these read KHHNRIKYTCFDISDSYIIFGASSGSLYLFNRNGKFLLLI, NKHGAITSLSISANSKYVAFATQRSLICVYAVNLSAQATP, and DQSVQVTCIHWTQDEKQFYYGDSRGQVSLVLLSSFIGHSL. Residues 422-446 show a composition bias toward polar residues; that stretch reads ALDTHSSGGSSATTERSLSGGSSSR. The segment at 422-447 is disordered; sequence ALDTHSSGGSSATTERSLSGGSSSRA.

Belongs to the HPS5 family. As to expression, expressed in eye pigment granules.

In terms of biological role, has a role in the biogenesis of eye pigment granules. Eye pigment granules are specialized forms of late endosomes or lysosomes. Biogenesis of pigment granules in the eye requires molecular components required for protein delivery to lysosomes. In Drosophila melanogaster (Fruit fly), this protein is BLOC-2 complex member HPS5 homolog.